Reading from the N-terminus, the 466-residue chain is cAMP-dependent protein kinase regulatory subunit (466 aa).

A dimerization and phosphorylation region spans residues 25-231 (QFAANYFTKR…RLEKAVGKNF (207 aa)). Residues 71 to 80 (ASLSHGSSKA) are compositionally biased toward low complexity. Disordered regions lie at residues 71-90 (ASLS…ISSS), 109-139 (STHI…PGIF), 154-179 (NSSV…VVNP), and 193-218 (SVSG…KSPE). The segment covering 81–90 (NASQSGISSS) has biased composition (polar residues). Positions 109 to 118 (STHIVDHLDS) are enriched in basic and acidic residues. Residue Ser-193 is modified to Phosphoserine. The segment covering 200 to 218 (QPDHLDDWKPENFQEKSPE) has biased composition (basic and acidic residues). 3',5'-cyclic AMP is bound by residues 232–347 (LFNK…LLKN), Glu-297, Arg-306, 350–466 (ILKS…RSKH), Glu-416, and Arg-425.

This sequence belongs to the cAMP-dependent kinase regulatory chain family. As to quaternary structure, tetramer, composed of 2 regulatory (R) and 2 catalytic (C) subunits. In the presence of cAMP it dissociates into 2 active monomeric C subunits and an R dimer.

This chain is cAMP-dependent protein kinase regulatory subunit (PKAR), found in Kluyveromyces lactis (strain ATCC 8585 / CBS 2359 / DSM 70799 / NBRC 1267 / NRRL Y-1140 / WM37) (Yeast).